Consider the following 154-residue polypeptide: UPF0178 protein Gbem_2221 (154 aa).

This sequence belongs to the UPF0178 family.

The chain is UPF0178 protein Gbem_2221 from Citrifermentans bemidjiense (strain ATCC BAA-1014 / DSM 16622 / JCM 12645 / Bem) (Geobacter bemidjiensis).